The following is a 301-amino-acid chain: ATP synthase F(0) complex subunit B1, mitochondrial (301 aa).

A mitochondrion-targeting transit peptide spans 1–21; it reads MSLSRLSSPQTFSRVFIVARG.

It belongs to the eukaryotic ATPase B chain family. As to quaternary structure, subunit of the F-type ATPase which has 2 components, CF(1) - the catalytic core - and CF(0) - the membrane proton channel.

Its subcellular location is the mitochondrion. The protein resides in the mitochondrion inner membrane. Its function is as follows. Mitochondrial membrane ATP synthase (F(1)F(0) ATP synthase or Complex V) produces ATP from ADP in the presence of a proton gradient across the membrane which is generated by electron transport complexes of the respiratory chain. F-type ATPases consist of two structural domains, F(1) - containing the extramembraneous catalytic core, and F(0) - containing the membrane proton channel, linked together by a central stalk and a peripheral stalk. During catalysis, ATP synthesis in the catalytic domain of F(1) is coupled via a rotary mechanism of the central stalk subunits to proton translocation. Part of the complex F(0) domain and the peripheric stalk, which acts as a stator to hold the subunits of the catalytic subcomplexes relative to the rotary elements. Plays a role in germline development. This is ATP synthase F(0) complex subunit B1, mitochondrial from Caenorhabditis elegans.